A 2537-amino-acid chain; its full sequence is Centrosomal protein of 192 kDa (2537 aa).

2 disordered regions span residues 69-138 and 288-308; these read FSVP…ATES and HSSE…LPGT. Positions 70–81 are enriched in low complexity; the sequence is SVPSGSSPGSQS. A compositionally biased stretch (polar residues) spans 106–122; sequence VESQRLSNALSKQSALQ. The segment covering 288–298 has biased composition (basic and acidic residues); sequence HSSETTHKESE. A Phosphoserine modification is found at Ser-812. Disordered regions lie at residues 950 to 1021, 1043 to 1064, 1101 to 1158, and 1182 to 1234; these read VTFE…QQQP, VSEP…DRKS, KGTL…WTSN, and ATSH…STVH. Positions 960-970 are enriched in polar residues; the sequence is PKNSDLKNTSP. The segment covering 984–1005 has biased composition (low complexity); it reads FRPSTSPLSHSSPSEISGTSSS. Composition is skewed to polar residues over residues 1046–1055 and 1103–1112; these read PESSYPTTAT and TLSSIIQNNS. Basic and acidic residues predominate over residues 1128–1141; that stretch reads EYVKPDFRWSKDPS. The segment covering 1142–1158 has biased composition (polar residues); the sequence is SKSGNLLETSEVGWTSN. Positions 1195–1207 are enriched in basic and acidic residues; it reads EDQRISPKDKSTA. Residues 1213–1234 show a composition bias toward polar residues; that stretch reads GQVSHQTTSENQCTPIPSSTVH. A phosphoserine mark is found at Ser-1755, Ser-2098, and Ser-2110. Residue Pro-2313 is modified to Hydroxyproline.

As to quaternary structure, interacts with SHBG. Interacts with PLK4; this interaction mediates the formation of a ternary complex composed by PLK4, TENT5C and CEP192. Interacts with CCDC66. Post-translationally, hydroxylation by PHD1/EGLN2 at Pro-2313 promotes ubiquitination. In terms of processing, ubiquitinated by a SCF(SKP2) complex following proline hydroxylation. Ubiquitinated in a FBXL13-dependent manner, leading to proteasomal degradation.

It localises to the cytoplasm. It is found in the cytoskeleton. The protein resides in the microtubule organizing center. The protein localises to the centrosome. Its subcellular location is the centriole. Required for mitotic centrosome maturation and bipolar spindle assembly. Appears to be a major regulator of pericentriolar material (PCM) recruitment, centrosome maturation, and centriole duplication. Centrosome-specific activating scaffold for AURKA and PLK1. The polypeptide is Centrosomal protein of 192 kDa (Homo sapiens (Human)).